The primary structure comprises 173 residues: Co-chaperone protein HscB homolog (173 aa).

Residues 5–77 form the J domain; it reads CHFALFDLQP…PRRARYLLAI (73 aa).

The protein belongs to the HscB family. In terms of assembly, interacts with HscA and stimulates its ATPase activity.

Functionally, co-chaperone involved in the maturation of iron-sulfur cluster-containing proteins. Seems to help targeting proteins to be folded toward HscA. This Pseudomonas putida (strain W619) protein is Co-chaperone protein HscB homolog.